A 175-amino-acid polypeptide reads, in one-letter code: UPF0398 protein SPH_0478 (175 aa).

It belongs to the UPF0398 family.

The polypeptide is UPF0398 protein SPH_0478 (Streptococcus pneumoniae (strain Hungary19A-6)).